A 215-amino-acid polypeptide reads, in one-letter code: LysM and putative peptidoglycan-binding domain-containing protein 2 (215 aa).

Residues 1 to 40 are disordered; the sequence is MADLSPAPALREGGPRAHRPSAPSPPPRSRSTSEPEEAEL. Ala2 carries the post-translational modification N-acetylalanine. 4 positions are modified to phosphoserine: Ser5, Ser24, Ser33, and Ser57. Residues 71 to 115 enclose the LysM domain; the sequence is VEHRVRAGDTLQGIALKYGVTMEQIKRANKLFTNDCIFLKKTLSI. 2 disordered regions span residues 135–176 and 195–215; these read ESET…EVSA and RKLKEESRDEESPYAASLYHS. The span at 145 to 156 shows a compositional bias: acidic residues; sequence QEEEPVVSEEEL. Over residues 157–169 the composition is skewed to pro residues; the sequence is PPPSPQDPDPKPA. Over residues 196–205 the composition is skewed to basic and acidic residues; that stretch reads KLKEESRDEE.

This Mus musculus (Mouse) protein is LysM and putative peptidoglycan-binding domain-containing protein 2 (Lysmd2).